Here is a 304-residue protein sequence, read N- to C-terminus: Acetylglutamate kinase (304 aa).

Residues 77–78, Arg-99, and Asn-193 each bind substrate; that span reads GG.

This sequence belongs to the acetylglutamate kinase family. ArgB subfamily.

Its subcellular location is the cytoplasm. The enzyme catalyses N-acetyl-L-glutamate + ATP = N-acetyl-L-glutamyl 5-phosphate + ADP. Its pathway is amino-acid biosynthesis; L-arginine biosynthesis; N(2)-acetyl-L-ornithine from L-glutamate: step 2/4. Functionally, catalyzes the ATP-dependent phosphorylation of N-acetyl-L-glutamate. The sequence is that of Acetylglutamate kinase from Chlorobium limicola (strain DSM 245 / NBRC 103803 / 6330).